Here is a 185-residue protein sequence, read N- to C-terminus: Threonylcarbamoyl-AMP synthase (185 aa).

Positions S4–S185 constitute a YrdC-like domain.

It belongs to the SUA5 family. TsaC subfamily.

The protein resides in the cytoplasm. It carries out the reaction L-threonine + hydrogencarbonate + ATP = L-threonylcarbamoyladenylate + diphosphate + H2O. Required for the formation of a threonylcarbamoyl group on adenosine at position 37 (t(6)A37) in tRNAs that read codons beginning with adenine. Catalyzes the conversion of L-threonine, HCO(3)(-)/CO(2) and ATP to give threonylcarbamoyl-AMP (TC-AMP) as the acyladenylate intermediate, with the release of diphosphate. The chain is Threonylcarbamoyl-AMP synthase from Pseudomonas fluorescens (strain ATCC BAA-477 / NRRL B-23932 / Pf-5).